A 533-amino-acid polypeptide reads, in one-letter code: Thromboxane-A synthase (533 aa).

At 1–10 (MEALGFLKLE) the chain is on the cytoplasmic side. A helical transmembrane segment spans residues 11 to 31 (VNGPMVTVALSVALLALLKWY). The Lumenal segment spans residues 32–75 (STSAFSRLEKLGLRHPKPSPFIGNLMFFRQGFWESQMELRKLYG). The chain crosses the membrane as a helical span at residues 76-96 (PLCGYYLGRRMFIVISEPDMI). The Cytoplasmic segment spans residues 97–223 (KQVLVENFSN…KRFFEFCIPR (127 aa)). A helical membrane pass occupies residues 224–244 (PILVLLLSFPSIMVPLARILP). Topologically, residues 245 to 335 (NKNRDELNGF…LTVDEIVGQA (91 aa)) are lumenal. A helical membrane pass occupies residues 336-356 (FIFLIAGYEIVTNTLSFATYL). Residues 357-533 (LATNPDCQEK…NGVYIKIVSR (177 aa)) are Cytoplasmic-facing. Cys479 is a binding site for heme.

Belongs to the cytochrome P450 family. Monomer. Heme is required as a cofactor.

It is found in the endoplasmic reticulum membrane. The catalysed reaction is prostaglandin H2 = thromboxane A2. The enzyme catalyses prostaglandin H2 = (12S)-hydroxy-(5Z,8E,10E)-heptadecatrienoate + malonaldehyde. It carries out the reaction a hydroperoxyeicosatetraenoate = an oxoeicosatetraenoate + H2O. It catalyses the reaction (15S)-hydroperoxy-(5Z,8Z,11Z,13E)-eicosatetraenoate = 15-oxo-(5Z,8Z,11Z,13E)-eicosatetraenoate + H2O. The catalysed reaction is (15S)-hydroperoxy-(5Z,8Z,11Z,13E)-eicosatetraenoate + AH2 = (15S)-hydroxy-(5Z,8Z,11Z,13E)-eicosatetraenoate + A + H2O. Catalyzes the conversion of prostaglandin H2 (PGH2) to thromboxane A2 (TXA2), a potent inducer of blood vessel constriction and platelet aggregation. Also cleaves PGH2 to 12-hydroxy-heptadecatrienoicacid (12-HHT) and malondialdehyde, which is known to act as a mediator of DNA damage. 12-HHT and malondialdehyde are formed stoichiometrically in the same amounts as TXA2. Additionally, displays dehydratase activity, toward (15S)-hydroperoxy-(5Z,8Z,11Z,13E)-eicosatetraenoate (15(S)-HPETE) producing 15-KETE and 15-HETE. This Macaca fascicularis (Crab-eating macaque) protein is Thromboxane-A synthase (TBXAS1).